The primary structure comprises 202 residues: dTTP/UTP pyrophosphatase (202 aa).

Residue Asp76 is the Proton acceptor of the active site.

This sequence belongs to the Maf family. YhdE subfamily. A divalent metal cation serves as cofactor.

The protein localises to the cytoplasm. It carries out the reaction dTTP + H2O = dTMP + diphosphate + H(+). It catalyses the reaction UTP + H2O = UMP + diphosphate + H(+). Functionally, nucleoside triphosphate pyrophosphatase that hydrolyzes dTTP and UTP. May have a dual role in cell division arrest and in preventing the incorporation of modified nucleotides into cellular nucleic acids. The sequence is that of dTTP/UTP pyrophosphatase from Neisseria meningitidis serogroup B (strain ATCC BAA-335 / MC58).